The sequence spans 368 residues: N-acetylneuraminate epimerase (368 aa).

A signal peptide spans 1 to 19 (MNKTITALAIMMASFAANA). Kelch repeat units follow at residues 40–84 (TVYI…AFID), 86–137 (NLYV…FVHN), 139–173 (KAYVTGGVNQNIFNGYFEDLNEAGKDSTAVDKINA), 174–219 (YYFD…VNKG), 222–265 (TWLI…VAGG), 287–336 (ENYQ…PWNN), and 338–367 (LLIIGGETAGGKAVTDSVLISVKDNKVTVQ). Glu228 acts as the Proton acceptor in catalysis.

The protein belongs to the NanM family. In terms of assembly, homodimer.

It localises to the periplasm. It catalyses the reaction N-acetyl-alpha-neuraminate = N-acetyl-beta-neuraminate. Its function is as follows. Converts alpha-N-acetylneuranimic acid (Neu5Ac) to the beta-anomer, accelerating the equilibrium between the alpha- and beta-anomers. Probably facilitates sialidase-negative bacteria to compete successfully for limited amounts of extracellular Neu5Ac, which is likely taken up in the beta-anomer. In addition, the rapid removal of sialic acid from solution might be advantageous to the bacterium to damp down host responses. In Shigella boydii serotype 4 (strain Sb227), this protein is N-acetylneuraminate epimerase.